Consider the following 346-residue polypeptide: MSYQVSVAVVGATGYVGVELVRLLLAHPMVKIRYLCATQSTGKLLSSSYFHISQNYISISVSSFDDIDLDKLDVVFLCLPHGASSEIVKKIHNVVKVIDLSADFRIKDPDIYKQWYGVHYCPDLIKDFVYGLTEIYYEDIQKSSFIACPGCYPTSVLIPLFPLLRLRLVKSNNIIVDAKSGVSGAGRSVKQDNLFCEVYDAIKSYKVSNHRHIPEIEQELCFAACREDINLQFVPNLIPVKRGMMSNIYLELEVGVSLTDVREALLLFYRDSFFVVVDEEKAITTRSVVGTNYCYLGIFPGRLPNTIVIISVIDNLLKGAAGQAVQNFNVMMSYEEKLALSNIPYF.

The active site involves Cys151.

The protein belongs to the NAGSA dehydrogenase family. Type 1 subfamily.

It is found in the cytoplasm. It catalyses the reaction N-acetyl-L-glutamate 5-semialdehyde + phosphate + NADP(+) = N-acetyl-L-glutamyl 5-phosphate + NADPH + H(+). It functions in the pathway amino-acid biosynthesis; L-arginine biosynthesis; N(2)-acetyl-L-ornithine from L-glutamate: step 3/4. In terms of biological role, catalyzes the NADPH-dependent reduction of N-acetyl-5-glutamyl phosphate to yield N-acetyl-L-glutamate 5-semialdehyde. The polypeptide is N-acetyl-gamma-glutamyl-phosphate reductase (Ehrlichia canis (strain Jake)).